A 474-amino-acid chain; its full sequence is Phenylalanine--tRNA ligase alpha subunit (474 aa).

L-phenylalanine contacts are provided by residues Thr-317, 356–358, and Tyr-396; that span reads QLE. Glu-398 lines the Mg(2+) pocket. Phe-421 is an L-phenylalanine binding site.

The protein belongs to the class-II aminoacyl-tRNA synthetase family. Phe-tRNA synthetase alpha subunit type 2 subfamily. Tetramer of two alpha and two beta subunits. Requires Mg(2+) as cofactor.

The protein resides in the cytoplasm. It catalyses the reaction tRNA(Phe) + L-phenylalanine + ATP = L-phenylalanyl-tRNA(Phe) + AMP + diphosphate + H(+). This is Phenylalanine--tRNA ligase alpha subunit from Methanocorpusculum labreanum (strain ATCC 43576 / DSM 4855 / Z).